A 289-amino-acid polypeptide reads, in one-letter code: 4-hydroxy-tetrahydrodipicolinate synthase (289 aa).

Threonine 43 lines the pyruvate pocket. Tyrosine 131 acts as the Proton donor/acceptor in catalysis. Lysine 160 (schiff-base intermediate with substrate) is an active-site residue. Valine 200 is a binding site for pyruvate.

It belongs to the DapA family. In terms of assembly, homotetramer; dimer of dimers.

The protein localises to the cytoplasm. The catalysed reaction is L-aspartate 4-semialdehyde + pyruvate = (2S,4S)-4-hydroxy-2,3,4,5-tetrahydrodipicolinate + H2O + H(+). It functions in the pathway amino-acid biosynthesis; L-lysine biosynthesis via DAP pathway; (S)-tetrahydrodipicolinate from L-aspartate: step 3/4. Its function is as follows. Catalyzes the condensation of (S)-aspartate-beta-semialdehyde [(S)-ASA] and pyruvate to 4-hydroxy-tetrahydrodipicolinate (HTPA). The protein is 4-hydroxy-tetrahydrodipicolinate synthase of Methanococcus maripaludis (strain C7 / ATCC BAA-1331).